A 128-amino-acid polypeptide reads, in one-letter code: Large ribosomal subunit protein bL12 (128 aa).

It belongs to the bacterial ribosomal protein bL12 family. As to quaternary structure, homodimer. Part of the ribosomal stalk of the 50S ribosomal subunit. Forms a multimeric L10(L12)X complex, where L10 forms an elongated spine to which 2 to 4 L12 dimers bind in a sequential fashion. Binds GTP-bound translation factors.

Forms part of the ribosomal stalk which helps the ribosome interact with GTP-bound translation factors. Is thus essential for accurate translation. This is Large ribosomal subunit protein bL12 from Synechococcus sp. (strain CC9902).